A 616-amino-acid chain; its full sequence is Dihydroxy-acid dehydratase (616 aa).

A Mg(2+)-binding site is contributed by aspartate 81. A [2Fe-2S] cluster-binding site is contributed by cysteine 122. 2 residues coordinate Mg(2+): aspartate 123 and lysine 124. Lysine 124 carries the N6-carboxylysine modification. Cysteine 195 is a binding site for [2Fe-2S] cluster. Glutamate 491 is a binding site for Mg(2+). Serine 517 functions as the Proton acceptor in the catalytic mechanism.

The protein belongs to the IlvD/Edd family. Homodimer. [2Fe-2S] cluster serves as cofactor. Requires Mg(2+) as cofactor.

It catalyses the reaction (2R)-2,3-dihydroxy-3-methylbutanoate = 3-methyl-2-oxobutanoate + H2O. The catalysed reaction is (2R,3R)-2,3-dihydroxy-3-methylpentanoate = (S)-3-methyl-2-oxopentanoate + H2O. The protein operates within amino-acid biosynthesis; L-isoleucine biosynthesis; L-isoleucine from 2-oxobutanoate: step 3/4. Its pathway is amino-acid biosynthesis; L-valine biosynthesis; L-valine from pyruvate: step 3/4. Functions in the biosynthesis of branched-chain amino acids. Catalyzes the dehydration of (2R,3R)-2,3-dihydroxy-3-methylpentanoate (2,3-dihydroxy-3-methylvalerate) into 2-oxo-3-methylpentanoate (2-oxo-3-methylvalerate) and of (2R)-2,3-dihydroxy-3-methylbutanoate (2,3-dihydroxyisovalerate) into 2-oxo-3-methylbutanoate (2-oxoisovalerate), the penultimate precursor to L-isoleucine and L-valine, respectively. The sequence is that of Dihydroxy-acid dehydratase from Salmonella newport (strain SL254).